A 931-amino-acid polypeptide reads, in one-letter code: GPI ethanolamine phosphate transferase 1 (931 aa).

A topological domain (cytoplasmic) is located at residue methionine 1. Residues leucine 2–phenylalanine 24 traverse the membrane as a helical segment. Residues threonine 25 to phenylalanine 442 are Lumenal-facing. 3 N-linked (GlcNAc...) asparagine glycosylation sites follow: asparagine 128, asparagine 192, and asparagine 350. Residues leucine 443 to isoleucine 463 traverse the membrane as a helical segment. Residues lysine 464–histidine 482 are Cytoplasmic-facing. The chain crosses the membrane as a helical span at residues leucine 483–alanine 503. Over cysteine 504–tyrosine 508 the chain is Lumenal. The helical transmembrane segment at tyrosine 509–isoleucine 529 threads the bilayer. The Cytoplasmic segment spans residues glutamine 530 to histidine 543. Residues phenylalanine 544–tyrosine 564 form a helical membrane-spanning segment. Position 565 (arginine 565) is a topological domain, lumenal. The chain crosses the membrane as a helical span at residues tyrosine 566–threonine 586. Over arginine 587 to threonine 591 the chain is Cytoplasmic. The chain crosses the membrane as a helical span at residues serine 592–glycine 612. Topologically, residues arginine 613–serine 618 are lumenal. Residues leucine 619–methionine 639 traverse the membrane as a helical segment. At lysine 640–glutamate 649 the chain is on the cytoplasmic side. A helical membrane pass occupies residues leucine 650 to threonine 670. Over glutamine 671–glutamine 685 the chain is Lumenal. Residues isoleucine 686–leucine 706 traverse the membrane as a helical segment. Residues phenylalanine 707–leucine 723 are Cytoplasmic-facing. A helical membrane pass occupies residues leucine 724 to isoleucine 744. The Lumenal portion of the chain corresponds to asparagine 745 to arginine 786. Residues alanine 787–isoleucine 807 traverse the membrane as a helical segment. At asparagine 808–proline 824 the chain is on the cytoplasmic side. Residues phenylalanine 825 to alanine 845 form a helical membrane-spanning segment. Over phenylalanine 846–lysine 858 the chain is Lumenal. Residues serine 859–valine 879 traverse the membrane as a helical segment. At lysine 880–histidine 894 the chain is on the cytoplasmic side. Residues tyrosine 895–leucine 915 form a helical membrane-spanning segment. Residues threonine 916–methionine 931 lie on the Lumenal side of the membrane.

Belongs to the PIGG/PIGN/PIGO family. PIGN subfamily.

The protein localises to the endoplasmic reticulum membrane. The protein operates within glycolipid biosynthesis; glycosylphosphatidylinositol-anchor biosynthesis. Its function is as follows. Ethanolamine phosphate transferase that catalyzes an ethanolamine phosphate (EtNP) transfer from phosphatidylethanolamine (PE) to the 2-OH position of the first alpha-1,4-linked mannose of the alpha-D-Man-(1-&gt;6)-alpha-D-Man-(1-&gt;4)-alpha-D-GlcN-(1-&gt;6)-(1-radyl,2-acyl-sn-glycero-3-phospho)-2-acyl-inositol (also termed H3) intermediate to generate an alpha-D-Man-(1-&gt;6)-2-PEtn-alpha-D-Man-(1-&gt;4)-alpha-D-GlcN-(1-&gt;6)-(1-radyl,2-acyl-sn-glycero-3-phospho)-2-acyl-inositol and participates in the eighth step of the glycosylphosphatidylinositol-anchor biosynthesis. May act as suppressor of replication stress and chromosome missegregation. The chain is GPI ethanolamine phosphate transferase 1 from Homo sapiens (Human).